Reading from the N-terminus, the 1034-residue chain is Pro-apoptotic serine protease NMA111 (1034 aa).

The tract at residues 1–44 (MELNGSPQKPKRKHSGDPHSLPSAKHLRPDSAAPSSPRISGDQT) is disordered. The span at 33-44 (APSSPRISGDQT) shows a compositional bias: polar residues. The tract at residues 89–273 (VVSIHFCQTA…AATDYFLPLD (185 aa)) is serine protease. Residues histidine 127, aspartate 158, and serine 240 each act as charge relay system in the active site. PDZ domains follow at residues 296-381 (QWII…LLVQ) and 882-963 (IFCG…VTFD). Positions 1004–1034 (RRGTGDIANLNADAMDEGRDEGVSDVEPDIE) are disordered.

Belongs to the peptidase S1C family.

The protein resides in the nucleus. In terms of biological role, nuclear serine protease which mediates apoptosis. This is Pro-apoptotic serine protease NMA111 (NMA111) from Coccidioides immitis (strain RS) (Valley fever fungus).